The primary structure comprises 134 residues: Small ribosomal subunit protein bS6 (134 aa).

A disordered region spans residues 97-134; the sequence is TDVSPIKASEGREDRRSAPQREERNHDNSDEVSEESED. A compositionally biased stretch (basic and acidic residues) spans 105–125; sequence SEGREDRRSAPQREERNHDNS.

It belongs to the bacterial ribosomal protein bS6 family.

Its function is as follows. Binds together with bS18 to 16S ribosomal RNA. The protein is Small ribosomal subunit protein bS6 of Marinomonas sp. (strain MWYL1).